The primary structure comprises 64 residues: Metallothionein-A (64 aa).

The protein belongs to the metallothionein superfamily. Type 4 family.

Functionally, metallothioneins have a high content of cysteine residues that bind various heavy metals. The protein is Metallothionein-A (MTA) of Strongylocentrotus purpuratus (Purple sea urchin).